The chain runs to 599 residues: NTPase KAP family P-loop domain-containing protein 1 (599 aa).

A KAP NTPase domain is found at M1–L416. A run of 3 helical transmembrane segments spans residues G25–L45, V119–L139, and A156–V176. The tract at residues A543–A599 is disordered. The segment covering H579–H591 has biased composition (basic and acidic residues).

The protein localises to the membrane. The chain is NTPase KAP family P-loop domain-containing protein 1 (Nkpd1) from Mus musculus (Mouse).